A 141-amino-acid chain; its full sequence is Large ribosomal subunit protein uL11 (141 aa).

The protein belongs to the universal ribosomal protein uL11 family. In terms of assembly, part of the ribosomal stalk of the 50S ribosomal subunit. Interacts with L10 and the large rRNA to form the base of the stalk. L10 forms an elongated spine to which L12 dimers bind in a sequential fashion forming a multimeric L10(L12)X complex. Post-translationally, one or more lysine residues are methylated.

In terms of biological role, forms part of the ribosomal stalk which helps the ribosome interact with GTP-bound translation factors. The polypeptide is Large ribosomal subunit protein uL11 (Prochlorococcus marinus (strain MIT 9312)).